A 99-amino-acid polypeptide reads, in one-letter code: MICOS complex subunit MIC10 (99 aa).

2 consecutive transmembrane segments (helical) span residues 27 to 43 (RFVYSSLGGAFAGLLFF) and 50 to 66 (WASIAFGAGIGIGSAYT).

Belongs to the MICOS complex subunit Mic10 family. In terms of assembly, component of the mitochondrial contact site and cristae organizing system (MICOS) complex. The MICOS complex associates with mitochondrial outer membrane proteins. Present in a large lipid-enriched complex called mitochondrial transmembrane lipoprotein (MTL) complex made of proteins located in the two mitochondrial membranes, including the TOM complex and the core components of the MICOS complex and containing at least digalactosyldiacylglycerol (DGDG).

Its subcellular location is the mitochondrion inner membrane. Functionally, component of the MICOS complex, a large protein complex of the mitochondrial inner membrane that plays crucial roles in the maintenance of crista junctions, inner membrane architecture, and formation of contact sites to the outer membrane. The chain is MICOS complex subunit MIC10 from Arabidopsis thaliana (Mouse-ear cress).